Consider the following 172-residue polypeptide: Thioredoxin M5, chloroplastic (172 aa).

A chloroplast-targeting transit peptide spans 1 to 59; sequence MALETCFRAWATLHAPQPPSSGGSRDRLLLSGAGSSQSKPRLSVASPSPLRPASRFACQ. The interval 17–47 is disordered; that stretch reads QPPSSGGSRDRLLLSGAGSSQSKPRLSVASP. One can recognise a Thioredoxin domain in the interval 60–171; the sequence is CSNVVDEVVV…LATIIDKYVS (112 aa). Residues cysteine 95 and cysteine 98 each act as nucleophile in the active site. Cysteine 95 and cysteine 98 form a disulfide bridge.

Belongs to the thioredoxin family. Plant M-type subfamily. Expressed in leaves and at lower levels in flowers.

The protein localises to the plastid. The protein resides in the chloroplast. In terms of biological role, thiol-disulfide oxidoreductase probably involved in the redox regulation of chloroplastic enzymes. Required for chloroplast biogenesis and differentiation. Functions as an electron donor for plastidial 2-Cys peroxiredoxins and participates in hydrogen peroxide scavenging system in chloroplasts. Possesses reducing activity towards insulin disulfide bonds. The sequence is that of Thioredoxin M5, chloroplastic (TRXM) from Oryza sativa subsp. japonica (Rice).